The primary structure comprises 179 residues: Probable chorismate pyruvate-lyase (179 aa).

Residues Arg82, Leu120, and Glu165 each coordinate substrate.

It belongs to the UbiC family.

It is found in the cytoplasm. The enzyme catalyses chorismate = 4-hydroxybenzoate + pyruvate. It functions in the pathway cofactor biosynthesis; ubiquinone biosynthesis. In terms of biological role, removes the pyruvyl group from chorismate, with concomitant aromatization of the ring, to provide 4-hydroxybenzoate (4HB) for the ubiquinone pathway. In Vibrio parahaemolyticus serotype O3:K6 (strain RIMD 2210633), this protein is Probable chorismate pyruvate-lyase.